The following is a 424-amino-acid chain: Synaptotagmin-1 (424 aa).

The Vesicular segment spans residues 1-60 (MVSESHHEALAAPPATTVAAALPSNVTEPAAPGGGGGKEDAFSNLKKKFMNELNKIPLPP). Residue N25 is glycosylated (N-linked (GlcNAc...) asparagine). A helical membrane pass occupies residues 61–82 (WALIAIAIVAVLLILTCCFCLC). S-palmitoyl cysteine attachment occurs at residues C77, C78, C80, C82, and C85. Residues 83–424 (KKCLFKKKNK…EVDAMLAVKK (342 aa)) lie on the Cytoplasmic side of the membrane. Residues 117 to 142 (KDQALKDDDAETGLTDGEEKEEPKEV) are disordered. Residues 124–136 (DDAETGLTDGEEK) show a composition bias toward acidic residues. The phospholipid binding stretch occupies residues 138–384 (EPKEVEKLGK…AIGKVFVGYN (247 aa)). C2 domains are found at residues 144 to 263 (KLGK…EEWR) and 275 to 408 (KLGD…AQWH). The Ca(2+) site is built by L174, D175, D181, D233, F234, D235, S238, K239, D241, D306, D312, D366, D368, and D374.

The protein belongs to the synaptotagmin family. As to quaternary structure, homotetramer. It depends on Ca(2+) as a cofactor.

It localises to the cytoplasmic vesicle. The protein resides in the secretory vesicle membrane. The protein localises to the secretory vesicle. Its subcellular location is the synaptic vesicle membrane. It is found in the chromaffin granule membrane. It localises to the cytoplasm. Its function is as follows. Calcium sensor that participates in triggering neurotransmitter release at the synapse. May have a regulatory role in the membrane interactions during trafficking of synaptic vesicles at the active zone of the synapse. It binds acidic phospholipids with a specificity that requires the presence of both an acidic head group and a diacyl backbone. May play a role in dendrite formation by melanocytes. The polypeptide is Synaptotagmin-1 (SYT1) (Gallus gallus (Chicken)).